Consider the following 150-residue polypeptide: Pyruvoyl-dependent arginine decarboxylase (150 aa).

Serine 42 bears the Pyruvic acid (Ser) mark.

The protein belongs to the PdaD family. It depends on pyruvate as a cofactor.

It carries out the reaction L-arginine + H(+) = agmatine + CO2. This is Pyruvoyl-dependent arginine decarboxylase from Methanopyrus kandleri (strain AV19 / DSM 6324 / JCM 9639 / NBRC 100938).